We begin with the raw amino-acid sequence, 511 residues long: cAMP-regulated M3L protein (511 aa).

To D.discoideum protein M3R.

The chain is cAMP-regulated M3L protein (prtA) from Dictyostelium discoideum (Social amoeba).